The primary structure comprises 403 residues: Tubby-like F-box protein 6 (403 aa).

The F-box domain occupies 50–105; that stretch reads SCWAQLPPELLREVLVRIEESEVWWPSRRDVVACAGVCRSWRGITKEIVRVPEASG.

This sequence belongs to the TUB family. Ubiquitous.

This chain is Tubby-like F-box protein 6 (TULP6), found in Oryza sativa subsp. japonica (Rice).